Here is a 255-residue protein sequence, read N- to C-terminus: Acetylglutamate kinase (255 aa).

Substrate-binding positions include 40 to 41, Arg62, and Asn153; that span reads GG.

It belongs to the acetylglutamate kinase family. ArgB subfamily.

The protein resides in the cytoplasm. It catalyses the reaction N-acetyl-L-glutamate + ATP = N-acetyl-L-glutamyl 5-phosphate + ADP. Its pathway is amino-acid biosynthesis; L-arginine biosynthesis; N(2)-acetyl-L-ornithine from L-glutamate: step 2/4. Functionally, catalyzes the ATP-dependent phosphorylation of N-acetyl-L-glutamate. This is Acetylglutamate kinase from Bacillus cereus (strain ZK / E33L).